The following is a 117-amino-acid chain: MADQITSATATAKTVRIAARKARLVIDLIRGRDVAEALAILEFTPRSGSPIIEKVLKSAIANAEHNYDLDAQNLYVSKAYVNEGPTLKRFRPRAKGSASPINKRTSHVTVVVSEKEA.

This sequence belongs to the universal ribosomal protein uL22 family. As to quaternary structure, part of the 50S ribosomal subunit.

In terms of biological role, this protein binds specifically to 23S rRNA; its binding is stimulated by other ribosomal proteins, e.g. L4, L17, and L20. It is important during the early stages of 50S assembly. It makes multiple contacts with different domains of the 23S rRNA in the assembled 50S subunit and ribosome. Functionally, the globular domain of the protein is located near the polypeptide exit tunnel on the outside of the subunit, while an extended beta-hairpin is found that lines the wall of the exit tunnel in the center of the 70S ribosome. This is Large ribosomal subunit protein uL22 from Lacticaseibacillus casei (strain BL23) (Lactobacillus casei).